The primary structure comprises 109 residues: MKLSIIIIATSLVIAVVAFPSKDSKAIENDKTEQRMEIVVQETARACSKQIGDKCKRNCECCRKTVVCGTIYVGGKEVNQCMDKTSDNAILNGLGKGMNFIENTFSFCV.

Residues 1–18 (MKLSIIIIATSLVIAVVA) form the signal peptide. A propeptide spanning residues 19-46 (FPSKDSKAIENDKTEQRMEIVVQETARA) is cleaved from the precursor. 4 cysteine pairs are disulfide-bonded: cysteine 47–cysteine 62, cysteine 55–cysteine 68, cysteine 59–cysteine 108, and cysteine 61–cysteine 81.

This sequence belongs to the neurotoxin 25 family. F7 subfamily. Expressed by the venom gland.

It is found in the secreted. Its function is as follows. Putative ion channel inhibitor. This Cyriopagopus hainanus (Chinese bird spider) protein is Hainantoxin-XVIII-3.